The following is a 481-amino-acid chain: GDP-fucose protein O-fucosyltransferase 2 (481 aa).

The signal sequence occupies residues 1–22; it reads MKGRAHIWVALLLACLPPRFRN. GDP-beta-L-fucose contacts are provided by residues 59–63, 287–289, aspartate 365, and 382–383; these read GEGFN, HLR, and RF. Residue glutamate 60 is the Proton acceptor of the active site.

The protein belongs to the glycosyltransferase 68 family.

The protein resides in the endoplasmic reticulum. The enzyme catalyses L-seryl-[protein] + GDP-beta-L-fucose = 3-O-(alpha-L-fucosyl)-L-seryl-[protein] + GDP + H(+). It carries out the reaction L-threonyl-[protein] + GDP-beta-L-fucose = 3-O-(alpha-L-fucosyl)-L-threonyl-[protein] + GDP + H(+). It participates in protein modification; protein glycosylation. Catalyzes the reaction that attaches fucose through an O-glycosidic linkage to a conserved serine or threonine residue in the consensus sequence C1-X-X-S/T-C2 of thrombospondin type I repeats (TSRs) where C1 and C2 are the first and second cysteines of the repeat, respectively. O-fucosylates sporozoite proteins CSP and TRAP. O-fucosylation regulates stability and intracellular trafficking of TRAP but not of CSP. Probably by regulating protein O-fucosylation, may play a role in parasite transmission to the mosquito vector and/or infection of the vertebrate host hepatocytes; however, POFUT2 involvement in transmission/infection is controversial. The protein is GDP-fucose protein O-fucosyltransferase 2 of Plasmodium vivax (strain Salvador I).